A 353-amino-acid chain; its full sequence is Divinyl chlorophyll a/b light-harvesting protein PcbG (353 aa).

The next 6 helical transmembrane spans lie at 28–48, 64–84, 90–110, 204–224, 244–264, and 308–328; these read FISS…ANTL, GLVV…NGVF, LLVV…GGML, IMGG…FHIL, FVLS…ALWC, and LTNV…FHGL.

It belongs to the PsbB/PsbC family. IsiA/Pcb subfamily. As to quaternary structure, the antenna complex consists of divinyl chlorophylls (a and b) and divinyl chlorophyll a/b binding proteins and binds more divinyl chlorophyll b than does the antenna complex from high-light-adapted Prochlorococcus. Also forms complexes with PSI, consisting of a PSI trimer with surrounded by a PcbG ring (probably with 18 subunits). Is the only subunit found in this ring under iron-replete conditions. Divinyl chlorophyll a serves as cofactor. The cofactor is divinyl chlorophyll b.

Its subcellular location is the cellular thylakoid membrane. Its function is as follows. The antenna complex functions as a light receptor, it captures and delivers excitation energy to photosystems I. The Prochlorales pcb genes are not related to higher plant LHCs. This is Divinyl chlorophyll a/b light-harvesting protein PcbG (pcbG) from Prochlorococcus marinus (strain SARG / CCMP1375 / SS120).